The sequence spans 67 residues: Penaeidin-4c (67 aa).

Positions 1-19 (MRLVVCLVFLASFALVCQG) are cleaved as a signal peptide. 3 disulfide bridges follow: Cys42/Cys56, Cys45/Cys63, and Cys57/Cys64. Arg66 is modified (arginine amide).

It belongs to the penaeidin family.

The protein resides in the cytoplasmic granule. In terms of biological role, antibacterial and antifungal activity. Presents chitin-binding activity. The protein is Penaeidin-4c of Penaeus vannamei (Whiteleg shrimp).